Reading from the N-terminus, the 1081-residue chain is Isoleucine--tRNA ligase (1081 aa).

Residues 53 to 63 (PFATGLPHYGN) carry the 'HIGH' region motif. Positions 607–611 (KMSKS) match the 'KMSKS' region motif. Lys-610 is a binding site for ATP.

This sequence belongs to the class-I aminoacyl-tRNA synthetase family.

It carries out the reaction tRNA(Ile) + L-isoleucine + ATP = L-isoleucyl-tRNA(Ile) + AMP + diphosphate. In Tetrahymena thermophila, this protein is Isoleucine--tRNA ligase (ILSA).